A 562-amino-acid chain; its full sequence is Arginine--tRNA ligase (562 aa).

The 'HIGH' region motif lies at Ala126–His136.

This sequence belongs to the class-I aminoacyl-tRNA synthetase family. As to quaternary structure, monomer.

The protein localises to the cytoplasm. The enzyme catalyses tRNA(Arg) + L-arginine + ATP = L-arginyl-tRNA(Arg) + AMP + diphosphate. The sequence is that of Arginine--tRNA ligase from Salinibacter ruber (strain DSM 13855 / M31).